A 210-amino-acid polypeptide reads, in one-letter code: Regulator of G-protein signaling 17 (210 aa).

The disordered stretch occupies residues 1 to 21; sequence MRKRQQSQNEGTQAVSQAPGN. An RGS domain is found at 84–200; that stretch reads NFDKMMKTPA…LNSQIYKAFV (117 aa). The residue at position 137 (tyrosine 137) is a Phosphotyrosine.

As to quaternary structure, interacts with GNAI1 and GNAQ. Interacts with GNAZ and GNAI2. Interacts with OPRM1. Forms a complex with mu-opioid receptors and G(alpha)z/i2 subunits, including GNAZ and GNAI2; the formation of this complex results in mu-opioid receptor desensitization. Interacts with HINT1. N- and O-glycosylated in synapsomal membranes. In terms of processing, serine phosphorylated in synapsomal membranes. Post-translationally, sumoylated with SUMO1 and SUM02 in synaptosomes. The sumoylated forms act as a scaffold for sequestering mu-opioid receptor-activated G(alpha) subunits. Desumoylated by HINT1. Detected in brain (at protein level). Highly expressed in the hypothalamus, periaqueductal gray matter, and pons-medulla. Lower levels in the thalamus, cortex and spinal cord. Weak expression in the striatum and cerebellum.

The protein resides in the membrane. It is found in the synapse. Its subcellular location is the synaptosome. The protein localises to the nucleus. It localises to the cytoplasm. Functionally, regulates G protein-coupled receptor signaling cascades, including signaling via muscarinic acetylcholine receptor CHRM2 and dopamine receptor DRD2. Inhibits signal transduction by increasing the GTPase activity of G protein alpha subunits, thereby driving them into their inactive GDP-bound form. Binds selectively to GNAZ and GNAI2 subunits, accelerates their GTPase activity and regulates their signaling activities. Negatively regulates mu-opioid receptor-mediated activation of the G-proteins. The protein is Regulator of G-protein signaling 17 (Rgs17) of Mus musculus (Mouse).